A 267-amino-acid chain; its full sequence is Small ribosomal subunit protein uS2 (267 aa).

Positions 224 to 244 (GRQGEDEDVTEDSFKDNKDAK) are disordered. Positions 235 to 244 (DSFKDNKDAK) are enriched in basic and acidic residues.

Belongs to the universal ribosomal protein uS2 family.

This is Small ribosomal subunit protein uS2 from Lactiplantibacillus plantarum (strain ATCC BAA-793 / NCIMB 8826 / WCFS1) (Lactobacillus plantarum).